Here is a 250-residue protein sequence, read N- to C-terminus: Probable transcriptional regulatory protein Mkms_2298 (250 aa).

This sequence belongs to the TACO1 family.

Its subcellular location is the cytoplasm. This Mycobacterium sp. (strain KMS) protein is Probable transcriptional regulatory protein Mkms_2298.